Reading from the N-terminus, the 180-residue chain is Shikimate kinase (180 aa).

ATP is bound at residue 14–19 (GAGKSC). Residue serine 18 participates in Mg(2+) binding. Substrate is bound by residues aspartate 36, arginine 60, and glycine 82. Arginine 120 serves as a coordination point for ATP. Position 139 (arginine 139) interacts with substrate.

Belongs to the shikimate kinase family. In terms of assembly, monomer. It depends on Mg(2+) as a cofactor.

It is found in the cytoplasm. It catalyses the reaction shikimate + ATP = 3-phosphoshikimate + ADP + H(+). It participates in metabolic intermediate biosynthesis; chorismate biosynthesis; chorismate from D-erythrose 4-phosphate and phosphoenolpyruvate: step 5/7. In terms of biological role, catalyzes the specific phosphorylation of the 3-hydroxyl group of shikimic acid using ATP as a cosubstrate. In Xanthomonas oryzae pv. oryzae (strain PXO99A), this protein is Shikimate kinase.